The sequence spans 178 residues: Large ribosomal subunit protein uL10 (178 aa).

The protein belongs to the universal ribosomal protein uL10 family. As to quaternary structure, part of the ribosomal stalk of the 50S ribosomal subunit. The N-terminus interacts with L11 and the large rRNA to form the base of the stalk. The C-terminus forms an elongated spine to which L12 dimers bind in a sequential fashion forming a multimeric L10(L12)X complex.

In terms of biological role, forms part of the ribosomal stalk, playing a central role in the interaction of the ribosome with GTP-bound translation factors. The sequence is that of Large ribosomal subunit protein uL10 from Leuconostoc mesenteroides subsp. mesenteroides (strain ATCC 8293 / DSM 20343 / BCRC 11652 / CCM 1803 / JCM 6124 / NCDO 523 / NBRC 100496 / NCIMB 8023 / NCTC 12954 / NRRL B-1118 / 37Y).